The sequence spans 147 residues: Large ribosomal subunit protein uL13 (147 aa).

It belongs to the universal ribosomal protein uL13 family. As to quaternary structure, part of the 50S ribosomal subunit.

This protein is one of the early assembly proteins of the 50S ribosomal subunit, although it is not seen to bind rRNA by itself. It is important during the early stages of 50S assembly. The sequence is that of Large ribosomal subunit protein uL13 from Lactobacillus delbrueckii subsp. bulgaricus (strain ATCC 11842 / DSM 20081 / BCRC 10696 / JCM 1002 / NBRC 13953 / NCIMB 11778 / NCTC 12712 / WDCM 00102 / Lb 14).